A 208-amino-acid chain; its full sequence is Uracil phosphoribosyltransferase (208 aa).

Residues Arg-78, Arg-103, and 130–138 contribute to the 5-phospho-alpha-D-ribose 1-diphosphate site; that span reads DPMLATGGS. Residues Ile-193 and 198–200 each bind uracil; that span reads GDA. Asp-199 contributes to the 5-phospho-alpha-D-ribose 1-diphosphate binding site.

This sequence belongs to the UPRTase family. Mg(2+) is required as a cofactor.

The enzyme catalyses UMP + diphosphate = 5-phospho-alpha-D-ribose 1-diphosphate + uracil. Its pathway is pyrimidine metabolism; UMP biosynthesis via salvage pathway; UMP from uracil: step 1/1. Its activity is regulated as follows. Allosterically activated by GTP. Functionally, catalyzes the conversion of uracil and 5-phospho-alpha-D-ribose 1-diphosphate (PRPP) to UMP and diphosphate. The chain is Uracil phosphoribosyltransferase from Haemophilus influenzae (strain 86-028NP).